The primary structure comprises 245 residues: Cytochrome c oxidase subunit 2 (245 aa).

The Mitochondrial intermembrane segment spans residues 1–36; sequence MYMLNNMLNDVPTPWGMFFQDSATPNMEGMMELHNN. The helical transmembrane segment at 37-56 threads the bilayer; that stretch reads VMFYLCMMLGFVSYMLYNML. Residues 57 to 76 lie on the Mitochondrial matrix side of the membrane; the sequence is TTYNHSVLPYKYLYHGQFIE. A helical transmembrane segment spans residues 77–101; that stretch reads IVWTTFPAMILLIIAFPSFILLYIC. The Mitochondrial intermembrane portion of the chain corresponds to 102 to 245; that stretch reads DEVIAPAMTI…GEFLAWIDEQ (144 aa). The Cu cation site is built by histidine 180, cysteine 215, glutamate 217, cysteine 219, histidine 223, and methionine 226. Glutamate 217 serves as a coordination point for Mg(2+).

It belongs to the cytochrome c oxidase subunit 2 family. Component of the cytochrome c oxidase (complex IV, CIV), a multisubunit enzyme composed of a catalytic core of 3 subunits and several supernumerary subunits. The complex exists as a monomer or a dimer and forms supercomplexes (SCs) in the inner mitochondrial membrane with ubiquinol-cytochrome c oxidoreductase (cytochrome b-c1 complex, complex III, CIII). Cu cation is required as a cofactor.

It is found in the mitochondrion inner membrane. It carries out the reaction 4 Fe(II)-[cytochrome c] + O2 + 8 H(+)(in) = 4 Fe(III)-[cytochrome c] + 2 H2O + 4 H(+)(out). In terms of biological role, component of the cytochrome c oxidase, the last enzyme in the mitochondrial electron transport chain which drives oxidative phosphorylation. The respiratory chain contains 3 multisubunit complexes succinate dehydrogenase (complex II, CII), ubiquinol-cytochrome c oxidoreductase (cytochrome b-c1 complex, complex III, CIII) and cytochrome c oxidase (complex IV, CIV), that cooperate to transfer electrons derived from NADH and succinate to molecular oxygen, creating an electrochemical gradient over the inner membrane that drives transmembrane transport and the ATP synthase. Cytochrome c oxidase is the component of the respiratory chain that catalyzes the reduction of oxygen to water. Electrons originating from reduced cytochrome c in the intermembrane space (IMS) are transferred via the dinuclear copper A center (CU(A)) of subunit 2 and heme A of subunit 1 to the active site in subunit 1, a binuclear center (BNC) formed by heme A3 and copper B (CU(B)). The BNC reduces molecular oxygen to 2 water molecules using 4 electrons from cytochrome c in the IMS and 4 protons from the mitochondrial matrix. In Dekkera bruxellensis (Brettanomyces custersii), this protein is Cytochrome c oxidase subunit 2 (COX2).